We begin with the raw amino-acid sequence, 113 residues long: UPF0482 protein KPK_2871 (113 aa).

Positions 1–28 (MNMTLNKRWCLTAILALSAVVYTSSSFA) are cleaved as a signal peptide. Residues 38–61 (GDSAQSRQQASMEKEQWNDTRSLR) are disordered. The span at 39–48 (DSAQSRQQAS) shows a compositional bias: polar residues. Over residues 49-59 (MEKEQWNDTRS) the composition is skewed to basic and acidic residues.

It belongs to the UPF0482 family.

The polypeptide is UPF0482 protein KPK_2871 (Klebsiella pneumoniae (strain 342)).